A 104-amino-acid chain; its full sequence is Protein MGF 110-2L (104 aa).

The N-terminal stretch at 1–31 (MRFFSYLGLLLAGLTSLQGFSTDNLLEEELR) is a signal peptide.

Belongs to the asfivirus MGF 110 family.

Its function is as follows. Plays a role in virus cell tropism, and may be required for efficient virus replication in macrophages. The polypeptide is Protein MGF 110-2L (African swine fever virus (strain Badajoz 1971 Vero-adapted) (Ba71V)).